We begin with the raw amino-acid sequence, 244 residues long: MDKNDLVQKAKLAEQAERYDDMAAAMKAVTEQGGELSNEERNLLSVAYKNVVGARRSSWRVISSIEQKTEGNEKKQQMAREYREKIEAELQDICKDVLALLDNYLIANATQAESKVFYLKMKGDYYRYLSEVASGDSKKTTVENSQQAYQEAFDISKKDMQPTHPIRLGLALNFSVFYYEILNSPEQACSLAKAAFDEAIAELDTLNEDSYKDSTLIMQLLRDNLTLWTSENQGDEGDAGEGEN.

Residue Met-1 is modified to N-acetylmethionine.

The protein belongs to the 14-3-3 family. As to quaternary structure, homodimer, and heterodimer with other family members. In terms of tissue distribution, expressed in brain, gill, heart, intestine, kidney, liver, ovary, skin, spleen and testis.

Its subcellular location is the cytoplasm. Its function is as follows. Adapter protein implicated in the regulation of a large spectrum of both general and specialized signaling pathways. Binds to a large number of partners, usually by recognition of a phosphoserine or phosphothreonine motif. Binding generally results in the modulation of the activity of the binding partner. In Oncorhynchus mykiss (Rainbow trout), this protein is 14-3-3 protein beta/alpha-1.